A 110-amino-acid polypeptide reads, in one-letter code: Small ribosomal subunit protein eS25 (110 aa).

Residues M1–E39 form a disordered region.

The protein belongs to the eukaryotic ribosomal protein eS25 family.

This is Small ribosomal subunit protein eS25 (rps25) from Dictyostelium discoideum (Social amoeba).